The chain runs to 224 residues: Vesicle transport through interaction with t-SNAREs homolog 1A (224 aa).

The Cytoplasmic segment spans residues 1-199 (MSADFEGYEQ…GMLRRIIQNR (199 aa)). 2 coiled-coil regions span residues 31–92 (PDEK…KRSR) and 106–185 (DAGN…GKSS). The chain crosses the membrane as a helical; Anchor for type IV membrane protein span at residues 200–220 (ILLVILGIIVVITILTAITFF). Residues 221 to 224 (VRGH) lie on the Vesicular side of the membrane.

It belongs to the VTI1 family. In terms of assembly, interacts with distinct SNARE complexes that contain either STX5 or STX6. Interacts with NAPA and, to a lesser extent, with NAPG. Identified in a complex containing STX6, STX12, VAMP4 and VTI1A. In terms of tissue distribution, specifically expressed in the neuronal tissues cerebellum, cortex and hippocampus. Isoform 1/VTI1A is expressed in the same neuronal tissues but also in lung, liver, kidney and spleen.

It is found in the membrane. Its subcellular location is the cytoplasmic vesicle. The protein localises to the secretory vesicle. It localises to the synaptic vesicle membrane. The protein resides in the clathrin-coated vesicle membrane. It is found in the golgi apparatus membrane. Its function is as follows. V-SNARE that mediates vesicle transport pathways through interactions with t-SNAREs on the target membrane. These interactions are proposed to mediate aspects of the specificity of vesicle trafficking and to promote fusion of the lipid bilayers. Involved in vesicular transport from the late endosomes to the trans-Golgi network. Along with VAMP7, involved in an non-conventional RAB1-dependent traffic route to the cell surface used by KCNIP1 and KCND2. May be concerned with increased secretion of cytokines associated with cellular senescence. This is Vesicle transport through interaction with t-SNAREs homolog 1A (Vti1a) from Rattus norvegicus (Rat).